The following is a 173-amino-acid chain: Crossover junction endodeoxyribonuclease RuvC (173 aa).

Catalysis depends on residues Asp-8, Glu-67, and Asp-139. Mg(2+) is bound by residues Asp-8, Glu-67, and Asp-139.

This sequence belongs to the RuvC family. In terms of assembly, homodimer which binds Holliday junction (HJ) DNA. The HJ becomes 2-fold symmetrical on binding to RuvC with unstacked arms; it has a different conformation from HJ DNA in complex with RuvA. In the full resolvosome a probable DNA-RuvA(4)-RuvB(12)-RuvC(2) complex forms which resolves the HJ. Mg(2+) is required as a cofactor.

It is found in the cytoplasm. It catalyses the reaction Endonucleolytic cleavage at a junction such as a reciprocal single-stranded crossover between two homologous DNA duplexes (Holliday junction).. Functionally, the RuvA-RuvB-RuvC complex processes Holliday junction (HJ) DNA during genetic recombination and DNA repair. Endonuclease that resolves HJ intermediates. Cleaves cruciform DNA by making single-stranded nicks across the HJ at symmetrical positions within the homologous arms, yielding a 5'-phosphate and a 3'-hydroxyl group; requires a central core of homology in the junction. The consensus cleavage sequence is 5'-(A/T)TT(C/G)-3'. Cleavage occurs on the 3'-side of the TT dinucleotide at the point of strand exchange. HJ branch migration catalyzed by RuvA-RuvB allows RuvC to scan DNA until it finds its consensus sequence, where it cleaves and resolves the cruciform DNA. This chain is Crossover junction endodeoxyribonuclease RuvC, found in Shewanella oneidensis (strain ATCC 700550 / JCM 31522 / CIP 106686 / LMG 19005 / NCIMB 14063 / MR-1).